A 185-amino-acid chain; its full sequence is MAKEWYILHTFSGREARVERAVRMLVEHARIPTNVIFDIKIPEELLTEVKDGKKRVVRRKFFPGYLLVEMDLPEVDWRIVCNEVRRIPGVSGFLGSSGNAKPQAVSADEARRILQKAGEIKGDRTPRIAQTFLVGQQVRIVEGPFATFSGEVEEVMSERNKVRVAVTIFGRATPVELELVQVEAL.

The region spanning 134 to 163 is the KOW domain; sequence VGQQVRIVEGPFATFSGEVEEVMSERNKVR.

Belongs to the NusG family.

Participates in transcription elongation, termination and antitermination. The sequence is that of Transcription termination/antitermination protein NusG from Treponema pallidum (strain Nichols).